A 434-amino-acid chain; its full sequence is Trigger factor (434 aa).

The 86-residue stretch at Gly-160–Pro-245 folds into the PPIase FKBP-type domain.

Belongs to the FKBP-type PPIase family. Tig subfamily.

Its subcellular location is the cytoplasm. It catalyses the reaction [protein]-peptidylproline (omega=180) = [protein]-peptidylproline (omega=0). Its function is as follows. Involved in protein export. Acts as a chaperone by maintaining the newly synthesized protein in an open conformation. Functions as a peptidyl-prolyl cis-trans isomerase. The chain is Trigger factor from Shewanella halifaxensis (strain HAW-EB4).